Reading from the N-terminus, the 141-residue chain is uncharacterized protein (141 aa).

This is an uncharacterized protein from Sinorhizobium fredii (strain NBRC 101917 / NGR234).